Consider the following 274-residue polypeptide: Formamidopyrimidine-DNA glycosylase (274 aa).

The Schiff-base intermediate with DNA role is filled by P2. The Proton donor role is filled by E3. K57 (proton donor; for beta-elimination activity) is an active-site residue. Residues H92, R111, and K152 each contribute to the DNA site. Residues Q237–R271 form an FPG-type zinc finger. R261 functions as the Proton donor; for delta-elimination activity in the catalytic mechanism.

It belongs to the FPG family. Monomer. The cofactor is Zn(2+).

The catalysed reaction is Hydrolysis of DNA containing ring-opened 7-methylguanine residues, releasing 2,6-diamino-4-hydroxy-5-(N-methyl)formamidopyrimidine.. It catalyses the reaction 2'-deoxyribonucleotide-(2'-deoxyribose 5'-phosphate)-2'-deoxyribonucleotide-DNA = a 3'-end 2'-deoxyribonucleotide-(2,3-dehydro-2,3-deoxyribose 5'-phosphate)-DNA + a 5'-end 5'-phospho-2'-deoxyribonucleoside-DNA + H(+). Functionally, involved in base excision repair of DNA damaged by oxidation or by mutagenic agents. Acts as a DNA glycosylase that recognizes and removes damaged bases. Has a preference for oxidized purines, such as 7,8-dihydro-8-oxoguanine (8-oxoG). Has AP (apurinic/apyrimidinic) lyase activity and introduces nicks in the DNA strand. Cleaves the DNA backbone by beta-delta elimination to generate a single-strand break at the site of the removed base with both 3'- and 5'-phosphates. This chain is Formamidopyrimidine-DNA glycosylase, found in Glaesserella parasuis serovar 5 (strain SH0165) (Haemophilus parasuis).